A 285-amino-acid polypeptide reads, in one-letter code: Tropomyosin alpha-3 chain (285 aa).

The stretch at 1–285 (MMEAIKKKMQ…DHALNDMTSI (285 aa)) forms a coiled coil. Methionine 2 carries the N-acetylmethionine modification. Residue methionine 2 is modified to N-acetylalanine. Positions 16–41 (KENALDRAEQAEAEQKQAEERSKQLE) are enriched in basic and acidic residues. Residues 16–44 (KENALDRAEQAEAEQKQAEERSKQLEDEL) form a disordered region. Threonine 54 is subject to Phosphothreonine. Residues serine 62 and serine 88 each carry the phosphoserine modification. Threonine 109 is subject to Phosphothreonine. Glutamate 125 and leucine 177 each carry N6-acetyllysine. At serine 207 the chain carries Phosphoserine. An N6-acetyllysine modification is found at tyrosine 215. Serine 216 bears the Phosphoserine mark. A Phosphothreonine modification is found at threonine 253. Tyrosine 262 bears the Phosphotyrosine mark. The residue at position 272 (serine 272) is a Phosphoserine. Threonine 283 bears the Phosphothreonine mark. At serine 284 the chain carries Phosphoserine.

It belongs to the tropomyosin family. Homodimer. Heterodimer of an alpha (TPM1, TPM3 or TPM4) and a beta (TPM2) chain. Interacts with TMOD1. Interacts with TNNT1.

The protein resides in the cytoplasm. The protein localises to the cytoskeleton. Its function is as follows. Binds to actin filaments in muscle and non-muscle cells. Plays a central role, in association with the troponin complex, in the calcium dependent regulation of vertebrate striated muscle contraction. Smooth muscle contraction is regulated by interaction with caldesmon. In non-muscle cells is implicated in stabilizing cytoskeleton actin filaments. This Homo sapiens (Human) protein is Tropomyosin alpha-3 chain (TPM3).